The primary structure comprises 592 residues: Inactive metallocarboxypeptidase ECM14 (592 aa).

Positions M1–A21 are cleaved as a signal peptide. The propeptide occupies I22–S174. Positions S170 to T179 are enriched in polar residues. A disordered region spans residues S170–S191. Residues D202–L521 enclose the Peptidase M14 domain. Zn(2+) contacts are provided by H264 and E267. Substrate contacts are provided by residues H264–E267, R322, and D339–R340. An intrachain disulfide couples C333 to C356. N349 carries an N-linked (GlcNAc...) asparagine glycan. H396 serves as a coordination point for Zn(2+). S397–Y398 contributes to the substrate binding site. The tract at residues A542 to R592 is disordered. Over residues D548–G558 the composition is skewed to acidic residues. Positions Q559–N575 are enriched in basic and acidic residues.

Belongs to the peptidase M14 family. The cofactor is Zn(2+).

It is found in the vacuole. It localises to the secreted. Functionally, inactive carboxypeptidase that may play a role in cell wall organization and biogenesis. In Blastomyces gilchristii (strain SLH14081) (Blastomyces dermatitidis), this protein is Inactive metallocarboxypeptidase ECM14 (ECM14).